Here is a 573-residue protein sequence, read N- to C-terminus: Methionine--tRNA ligase (573 aa).

The short motif at 11–21 (PYINGIKHLGN) is the 'HIGH' region element. Zn(2+) contacts are provided by C143, C146, C156, and C159. The 'KMSKS' region motif lies at 346-350 (QFSTS). T349 serves as a coordination point for ATP.

The protein belongs to the class-I aminoacyl-tRNA synthetase family. MetG type 1 subfamily. Monomer. Zn(2+) serves as cofactor.

The protein localises to the cytoplasm. The enzyme catalyses tRNA(Met) + L-methionine + ATP = L-methionyl-tRNA(Met) + AMP + diphosphate. Functionally, is required not only for elongation of protein synthesis but also for the initiation of all mRNA translation through initiator tRNA(fMet) aminoacylation. The protein is Methionine--tRNA ligase of Ruegeria sp. (strain TM1040) (Silicibacter sp.).